We begin with the raw amino-acid sequence, 359 residues long: DNA replication and repair protein RecF (359 aa).

ATP is bound at residue 30–37; it reads GPNGSGKT.

This sequence belongs to the RecF family.

It localises to the cytoplasm. In terms of biological role, the RecF protein is involved in DNA metabolism; it is required for DNA replication and normal SOS inducibility. RecF binds preferentially to single-stranded, linear DNA. It also seems to bind ATP. This is DNA replication and repair protein RecF from Aliivibrio salmonicida (strain LFI1238) (Vibrio salmonicida (strain LFI1238)).